Here is a 394-residue protein sequence, read N- to C-terminus: MHIRSLELRDYRSWPELKVDLEPGITVFIGRNGFGKTNIVEAIGYLAHLSSHRVSSDAPLVRAHAENARVSAVAVNQGRELAAHLLIKPHAANQASLNRTKVRTPRELLGVVKTVLFAPEDLALVKGEPAERRRYLDDIIATRQPRMAGVKADYDKVLKQRNALLKTATIALRRGYGTEEGAAALSTLDTWDGQLARLGAEVMAARFALLNELGPKIYEAYTTIAPESRPAAVNYKTTIDQGLSQFSEFDAGIIEATLLTELAAKRQREIERGSSLVGPHRDDVDLMLGDQPAKGFASHGETWSFALSLRIAEFNLLKSDGTDPILILDDVFSELDAGRREKLVGIAQEVEQVLITAAVHDDLPENLKKVLTAQHTVTVQDTGTGRISLLDVQP.

30–37 (GRNGFGKT) contacts ATP.

The protein belongs to the RecF family.

Its subcellular location is the cytoplasm. In terms of biological role, the RecF protein is involved in DNA metabolism; it is required for DNA replication and normal SOS inducibility. RecF binds preferentially to single-stranded, linear DNA. It also seems to bind ATP. In Corynebacterium glutamicum (strain ATCC 13032 / DSM 20300 / JCM 1318 / BCRC 11384 / CCUG 27702 / LMG 3730 / NBRC 12168 / NCIMB 10025 / NRRL B-2784 / 534), this protein is DNA replication and repair protein RecF.